Reading from the N-terminus, the 402-residue chain is Probable glutamate 5-kinase (402 aa).

Residues S58, D145, and N157 each coordinate substrate. ATP is bound by residues 177–178 (TD) and 218–224 (TGGMKTK). A PUA domain is found at 295–373 (HGSLEIDRGA…KEIASILGYN (79 aa)).

It belongs to the glutamate 5-kinase family.

The protein localises to the cytoplasm. It carries out the reaction L-glutamate + ATP = L-glutamyl 5-phosphate + ADP. Its pathway is amino-acid biosynthesis; L-proline biosynthesis; L-glutamate 5-semialdehyde from L-glutamate: step 1/2. Catalyzes the transfer of a phosphate group to glutamate to form glutamate 5-phosphate which rapidly cyclizes to 5-oxoproline. This is Probable glutamate 5-kinase from Schizosaccharomyces pombe (strain 972 / ATCC 24843) (Fission yeast).